Reading from the N-terminus, the 485-residue chain is Glutamyl-tRNA(Gln) amidotransferase subunit A (485 aa).

Residues Lys-78 and Ser-153 each act as charge relay system in the active site. The Acyl-ester intermediate role is filled by Ser-177.

This sequence belongs to the amidase family. GatA subfamily. As to quaternary structure, heterotrimer of A, B and C subunits.

It carries out the reaction L-glutamyl-tRNA(Gln) + L-glutamine + ATP + H2O = L-glutaminyl-tRNA(Gln) + L-glutamate + ADP + phosphate + H(+). Allows the formation of correctly charged Gln-tRNA(Gln) through the transamidation of misacylated Glu-tRNA(Gln) in organisms which lack glutaminyl-tRNA synthetase. The reaction takes place in the presence of glutamine and ATP through an activated gamma-phospho-Glu-tRNA(Gln). In Syntrophus aciditrophicus (strain SB), this protein is Glutamyl-tRNA(Gln) amidotransferase subunit A.